Consider the following 426-residue polypeptide: Kynureninase (426 aa).

Residues L110, S111, 138 to 141 (FPSD), D223, H226, and Y248 each bind pyridoxal 5'-phosphate. Residue K249 is modified to N6-(pyridoxal phosphate)lysine. Pyridoxal 5'-phosphate-binding residues include W279 and N307.

It belongs to the kynureninase family. Homodimer. Pyridoxal 5'-phosphate is required as a cofactor.

The enzyme catalyses L-kynurenine + H2O = anthranilate + L-alanine + H(+). It catalyses the reaction 3-hydroxy-L-kynurenine + H2O = 3-hydroxyanthranilate + L-alanine + H(+). The protein operates within amino-acid degradation; L-kynurenine degradation; L-alanine and anthranilate from L-kynurenine: step 1/1. It participates in cofactor biosynthesis; NAD(+) biosynthesis; quinolinate from L-kynurenine: step 2/3. Functionally, catalyzes the cleavage of L-kynurenine (L-Kyn) and L-3-hydroxykynurenine (L-3OHKyn) into anthranilic acid (AA) and 3-hydroxyanthranilic acid (3-OHAA), respectively. The protein is Kynureninase of Myxococcus xanthus (strain DK1622).